Here is a 301-residue protein sequence, read N- to C-terminus: Homoserine O-acetyltransferase (301 aa).

Cys142 (acyl-thioester intermediate) is an active-site residue. Substrate contacts are provided by Lys163 and Ser192. Catalysis depends on His235, which acts as the Proton acceptor. Residue Glu237 is part of the active site. Substrate is bound at residue Arg249.

This sequence belongs to the MetA family.

The protein resides in the cytoplasm. The enzyme catalyses L-homoserine + acetyl-CoA = O-acetyl-L-homoserine + CoA. Its pathway is amino-acid biosynthesis; L-methionine biosynthesis via de novo pathway; O-acetyl-L-homoserine from L-homoserine: step 1/1. Its function is as follows. Transfers an acetyl group from acetyl-CoA to L-homoserine, forming acetyl-L-homoserine. The protein is Homoserine O-acetyltransferase of Bacillus cereus (strain B4264).